The sequence spans 144 residues: Maximins 11/H1 (144 aa).

Positions Met-1–Ala-18 are cleaved as a signal peptide. Residues Arg-19–Arg-43 constitute a propeptide that is removed on maturation. Asparagine amide is present on Asn-70. Positions Thr-74–Arg-123 are excised as a propeptide. Leu-143 is subject to Leucine amide.

The protein belongs to the bombinin family. In terms of tissue distribution, expressed by the skin glands.

It is found in the secreted. Its function is as follows. Maximin-11 shows antimicrobial activity against bacteria and against the fungus C.albicans. It has little hemolytic activity. Maximin-H1 shows antibacterial activity against both Gram-positive and Gram-negative bacteria. It also shows antimicrobial activity against the fungus C.albicans. Shows strong hemolytic activity. The polypeptide is Maximins 11/H1 (Bombina maxima (Giant fire-bellied toad)).